Reading from the N-terminus, the 373-residue chain is SAM domain-containing protein SAMSN-1 (373 aa).

Residues 1-72 (MLKRKPSNVS…GGGLGKKMRA (72 aa)) form a disordered region. The Important for interaction with 14-3-3 proteins motif lies at 20 to 25 (RSSSFG). A phosphoserine mark is found at Ser-23 and Ser-34. Over residues 37–48 (KPDDSTEAHEGD) the composition is skewed to basic and acidic residues. The segment covering 50 to 61 (TNGSGEQSKTSN) has biased composition (polar residues). Ser-74 bears the Phosphoserine mark. Thr-76 bears the Phosphothreonine mark. A phosphoserine mark is found at Ser-90 and Ser-119. The disordered stretch occupies residues 91-153 (EEKDEEDGEN…DGTSNRDSFR (63 aa)). A compositionally biased stretch (low complexity) spans 123–146 (SDSMDSLYSGQSSSSGITSCSDGT). At Tyr-160 the chain carries Phosphotyrosine. The SH3 domain occupies 163-224 (PFCGRARVHT…KFIYVDVISE (62 aa)). Residues 241–305 (KKSKTLQEFL…LSAAENFLEE (65 aa)) enclose the SAM domain. The disordered stretch occupies residues 337 to 359 (DSGCYISSGNSDNGKEDLESENL).

In terms of assembly, interacts with FASLG. Interacts with phosphotyrosine containing proteins. Interacts (via SH3 domain) with CTTN. Interacts (phosphorylated at Ser-23) with YWHAB, YWHAE, YWHAG, YWHAH, YWHAZ and SFN. Interacts directly with SAP30 and HDAC1. Identified in a complex with SAP30 and HDAC1. Detected in peripheral blood B-cells (at protein level). Detected in spleen, liver and peripheral blood.

It localises to the nucleus. It is found in the cytoplasm. The protein resides in the cell projection. The protein localises to the ruffle. Functionally, negative regulator of B-cell activation. Down-regulates cell proliferation (in vitro). Promotes RAC1-dependent membrane ruffle formation and reorganization of the actin cytoskeleton. Regulates cell spreading and cell polarization. Stimulates HDAC1 activity. Regulates LYN activity by modulating its tyrosine phosphorylation. This Homo sapiens (Human) protein is SAM domain-containing protein SAMSN-1 (SAMSN1).